The chain runs to 370 residues: MSFDPQKFVDEISPQLKEIVDGRAIAAVSGGVDSTTAAVLSYKILGDKVIPVMIDTGFLRENEAENVKNMLKDLMPLQVIDEREKFISSLEGMSDAEEKRKKFRQLFYDTLSRIVKEFNAKYLIQGTIAADWVETQGGIKTQHNVLVQLGIDTEKEWGFKVVEPLADLYKDEVRALAKYLGLPRDIYNRQPFPGPGLLVRVVGKLTREKLEILRKVTTTVEKNLSELNLSQYFAVIFDSAAEYNKELSNEVGCDVKVYKTLATGVKGDVRAYGNIAGIECRKDYESLREIMEKLTSYNITHVVVKIKDKNPEGIYTIGIRAVNTQDFMTADFAKINWNILEKIANEINDKKIKEVVYDITTKPPATIEYE.

The GMPS ATP-PPase domain occupies 3-189 (FDPQKFVDEI…LGLPRDIYNR (187 aa)). Position 29 to 35 (29 to 35 (SGGVDST)) interacts with ATP.

In terms of assembly, heterodimer composed of a glutamine amidotransferase subunit (A) and a GMP-binding subunit (B).

The catalysed reaction is XMP + L-glutamine + ATP + H2O = GMP + L-glutamate + AMP + diphosphate + 2 H(+). It participates in purine metabolism; GMP biosynthesis; GMP from XMP (L-Gln route): step 1/1. Its function is as follows. Catalyzes the synthesis of GMP from XMP. This Sulfurisphaera tokodaii (strain DSM 16993 / JCM 10545 / NBRC 100140 / 7) (Sulfolobus tokodaii) protein is GMP synthase [glutamine-hydrolyzing] subunit B (guaAB).